Here is a 393-residue protein sequence, read N- to C-terminus: S-adenosylmethionine synthase 2 (393 aa).

Mg(2+) is bound at residue E9. Residue H15 participates in ATP binding. Position 43 (E43) interacts with K(+). Residues E56 and Q99 each contribute to the L-methionine site. ATP contacts are provided by residues 167–169, 235–238, D246, 252–253, A269, K273, and K277; these read DGK, SGRF, and RK. L-methionine is bound at residue D246. An L-methionine-binding site is contributed by K277.

The protein belongs to the AdoMet synthase family. In terms of assembly, homotetramer. Requires Mn(2+) as cofactor. It depends on Mg(2+) as a cofactor. The cofactor is Co(2+). K(+) is required as a cofactor.

The protein localises to the cytoplasm. The enzyme catalyses L-methionine + ATP + H2O = S-adenosyl-L-methionine + phosphate + diphosphate. It participates in amino-acid biosynthesis; S-adenosyl-L-methionine biosynthesis; S-adenosyl-L-methionine from L-methionine: step 1/1. In terms of biological role, catalyzes the formation of S-adenosylmethionine from methionine and ATP. The reaction comprises two steps that are both catalyzed by the same enzyme: formation of S-adenosylmethionine (AdoMet) and triphosphate, and subsequent hydrolysis of the triphosphate. The sequence is that of S-adenosylmethionine synthase 2 (SAMS2) from Elaeagnus umbellata (Autumn olive).